We begin with the raw amino-acid sequence, 81 residues long: Large ribosomal subunit protein bL31B (81 aa).

Belongs to the bacterial ribosomal protein bL31 family. Type B subfamily. As to quaternary structure, part of the 50S ribosomal subunit.

This chain is Large ribosomal subunit protein bL31B, found in Pediococcus pentosaceus (strain ATCC 25745 / CCUG 21536 / LMG 10740 / 183-1w).